Consider the following 425-residue polypeptide: MAGYVVVGTQWGDEGKGKIIDVLSEKADYVVRFQGGNNAGHTVVVDGEKFILQLLPSGVLQAGTCVIGPGVVIDPKVFLDEIDRIEKRGAKTDHVIISDRAHVIMPYHIEMDKIRESVEDRIKIGTTKKGIGPCYADKISRDGIRMSDLLDLKQFEEKLRYNLKEKNEIFTKIYGLEPLDFDTIFEEYKGYAEKIKHRIVDTIPMVNKALDENKLVLFEGAQAMMLDINYGTYPYVTSSSPTLGGVTTGAGISPRKIDKGIGVMKAYTTRVGEGPFVTEIKGEFGDKIRGIGGEYGAVTGRPRRCGWLDLVVGRYATEINGLTDIVMTKIDVLSGLGKLKICTAYEIDGVIHEYVPADTKSLDRAIPIYEELDGWDEDITQIKKYEDLPVNCRKYLERVQEILGCPISVVSVGPDRSQNIHIREI.

Residues 12-18 (GDEGKGK) and 40-42 (GHT) contribute to the GTP site. The active-site Proton acceptor is D13. D13 and G40 together coordinate Mg(2+). IMP contacts are provided by residues 13-16 (DEGK), 38-41 (NAGH), T127, R141, Q222, T237, and R301. H41 acts as the Proton donor in catalysis. 297–303 (AVTGRPR) contacts substrate. Residues R303, 329 to 331 (KID), and 411 to 413 (SVG) contribute to the GTP site.

The protein belongs to the adenylosuccinate synthetase family. Homodimer. Requires Mg(2+) as cofactor.

It localises to the cytoplasm. It catalyses the reaction IMP + L-aspartate + GTP = N(6)-(1,2-dicarboxyethyl)-AMP + GDP + phosphate + 2 H(+). The protein operates within purine metabolism; AMP biosynthesis via de novo pathway; AMP from IMP: step 1/2. Plays an important role in the de novo pathway of purine nucleotide biosynthesis. Catalyzes the first committed step in the biosynthesis of AMP from IMP. The polypeptide is Adenylosuccinate synthetase (Fusobacterium nucleatum subsp. nucleatum (strain ATCC 25586 / DSM 15643 / BCRC 10681 / CIP 101130 / JCM 8532 / KCTC 2640 / LMG 13131 / VPI 4355)).